The chain runs to 224 residues: C-&gt;U-editing enzyme APOBEC-2 (224 aa).

A disordered region spans residues M1–L24. E60 and H98 together coordinate Zn(2+). The 106-residue stretch at G64 to L169 folds into the CMP/dCMP-type deaminase domain. Residue E100 is the Proton donor of the active site. Positions 128 and 131 each coordinate Zn(2+).

It belongs to the cytidine and deoxycytidylate deaminase family. In terms of assembly, homotetramer. Zn(2+) serves as cofactor. In terms of tissue distribution, expressed exclusively in heart and skeletal muscle.

The catalysed reaction is cytidine(6666) in apoB mRNA + H2O + H(+) = uridine(6666) in apoB mRNA + NH4(+). Functionally, probable C to U editing enzyme whose physiological substrate is not yet known. Does not display detectable apoB mRNA editing. Has a low intrinsic cytidine deaminase activity. May play a role in the epigenetic regulation of gene expression through the process of active DNA demethylation. This Homo sapiens (Human) protein is C-&gt;U-editing enzyme APOBEC-2 (APOBEC2).